The primary structure comprises 1249 residues: MAGE-like protein 2 (1249 aa).

Polar residues predominate over residues 1–10 (MSQLSKNLGD). Disordered stretches follow at residues 1 to 50 (MSQL…PPID), 134 to 233 (APGA…AQPP), 300 to 327 (QPPA…QPMA), 349 to 378 (PQVP…WQAT), 410 to 433 (RQGP…VRQA), 515 to 569 (QALP…LPAP), 647 to 679 (QPFQ…EVPT), 714 to 746 (LMTP…RAPS), 862 to 910 (PQAT…DWQG), and 930 to 957 (VSGD…ILSG). 2 stretches are compositionally biased toward pro residues: residues 40 to 49 (PPVPWDPPPI) and 140 to 233 (AHPP…AQPP). Residues 301-311 (PPASGAPMAQP) are compositionally biased toward low complexity. Composition is skewed to pro residues over residues 312–324 (AAPP…PPAQ) and 349–358 (PQVPQGPQAP). Residues 369-378 (QATSPGWQAT) show a composition bias toward polar residues. The segment covering 410-432 (RQGPPPIRPGPPPIRPGPPPVRQ) has biased composition (pro residues). Residues 525-552 (QAPQARLPAPQVQAAPQVPTAPPATQVP) are compositionally biased toward low complexity. The segment covering 553 to 567 (AAPPAGPQVPQPVLP) has biased composition (pro residues). The segment covering 662-675 (QLPPQQAQASGPQA) has biased composition (low complexity). Positions 725–746 (SIDRRGSSKERRTSSKERRAPS) are enriched in basic and acidic residues. The span at 862–871 (PQATATTQEA) shows a compositional bias: low complexity. The segment covering 881 to 891 (RSGKATRKKKH) has biased composition (basic residues). In terms of domain architecture, MAGE spans 1020-1219 (LDERANALVQ…QSWPFHYLEA (200 aa)). Positions 1226-1235 (EDTDEDEPDT) are enriched in acidic residues. The disordered stretch occupies residues 1226-1249 (EDTDEDEPDTGDSAHGPTSRPPPR).

Part of a complex consisting of MAGEL2, TRIM27 and USP7; directly interacts with USP7. Interacts with TRIM27. Interacts with VPS35; leading to recruitment at retromer-containing endosomes. Interacts with BMAL1 and PER2. As to expression, expressed in placenta, fetal and adult brain. Not detected in heart and small intestine, very low levels in fibroblasts. Not expressed in brain of a Prader-Willi patient.

The protein resides in the early endosome. Its subcellular location is the cytoplasm. It localises to the nucleus. Probably enhances ubiquitin ligase activity of RING-type zinc finger-containing E3 ubiquitin-protein ligases, possibly through recruitment and/or stabilization of the Ubl-conjugating enzyme (E2) at the E3:substrate complex. Acts as a regulator of retrograde transport via its interaction with VPS35. Recruited to retromer-containing endosomes and promotes the formation of 'Lys-63'-linked polyubiquitin chains at 'Lys-220' of WASHC1 together with TRIM27, leading to promote endosomal F-actin assembly. Regulates the circadian clock by repressing the transcriptional activator activity of the CLOCK-BMAL1 heterodimer. Significantly promotes the cytoplasmic accumulation of CLOCK. The protein is MAGE-like protein 2 (MAGEL2) of Homo sapiens (Human).